The chain runs to 304 residues: Acetyl-coenzyme A carboxylase carboxyl transferase subunit beta (304 aa).

In terms of domain architecture, CoA carboxyltransferase N-terminal spans 23 to 292 (VWTKCDSCGQ…PNPEAPREGV (270 aa)). 4 residues coordinate Zn(2+): Cys-27, Cys-30, Cys-46, and Cys-49. The C4-type zinc finger occupies 27 to 49 (CDSCGQVLYRAELERNLEVCPKC). A disordered region spans residues 284–304 (NPEAPREGVVVPPVPDQEPEA). The segment covering 295–304 (PPVPDQEPEA) has biased composition (pro residues).

It belongs to the AccD/PCCB family. As to quaternary structure, acetyl-CoA carboxylase is a heterohexamer composed of biotin carboxyl carrier protein (AccB), biotin carboxylase (AccC) and two subunits each of ACCase subunit alpha (AccA) and ACCase subunit beta (AccD). The cofactor is Zn(2+).

The protein localises to the cytoplasm. It catalyses the reaction N(6)-carboxybiotinyl-L-lysyl-[protein] + acetyl-CoA = N(6)-biotinyl-L-lysyl-[protein] + malonyl-CoA. It functions in the pathway lipid metabolism; malonyl-CoA biosynthesis; malonyl-CoA from acetyl-CoA: step 1/1. In terms of biological role, component of the acetyl coenzyme A carboxylase (ACC) complex. Biotin carboxylase (BC) catalyzes the carboxylation of biotin on its carrier protein (BCCP) and then the CO(2) group is transferred by the transcarboxylase to acetyl-CoA to form malonyl-CoA. This Shigella flexneri serotype 5b (strain 8401) protein is Acetyl-coenzyme A carboxylase carboxyl transferase subunit beta.